The primary structure comprises 308 residues: Cell division protein FtsQ (308 aa).

Over 1 to 53 (MDSGGRIVYALNVEKTGFLRILSVTVLQRLYRRVFWFLFKCVAGIDVPRHAGS) the chain is Cytoplasmic. The chain crosses the membrane as a helical span at residues 54 to 74 (LAVFSFFFLSILYSISSGGYM). Residues 75 to 308 (NHFMKVAISN…LLKMLKAGSV (234 aa)) are Periplasmic-facing. In terms of domain architecture, POTRA spans 87–155 (FLVTHVDMSG…DRLRISLVER (69 aa)).

This sequence belongs to the FtsQ/DivIB family. FtsQ subfamily.

The protein resides in the cell inner membrane. In terms of biological role, essential cell division protein. The polypeptide is Cell division protein FtsQ (Bartonella bacilliformis).